Consider the following 463-residue polypeptide: Glutamate--tRNA ligase 1 (463 aa).

Residues P10–G20 carry the 'HIGH' region motif. The 'KMSKS' region signature appears at K238 to R242. Residue K241 coordinates ATP.

Belongs to the class-I aminoacyl-tRNA synthetase family. Glutamate--tRNA ligase type 1 subfamily. Monomer.

It is found in the cytoplasm. The catalysed reaction is tRNA(Glu) + L-glutamate + ATP = L-glutamyl-tRNA(Glu) + AMP + diphosphate. In terms of biological role, catalyzes the attachment of glutamate to tRNA(Glu) in a two-step reaction: glutamate is first activated by ATP to form Glu-AMP and then transferred to the acceptor end of tRNA(Glu). In Helicobacter pylori (strain P12), this protein is Glutamate--tRNA ligase 1.